An 88-amino-acid polypeptide reads, in one-letter code: Small ribosomal subunit protein bS16c (88 aa).

The protein belongs to the bacterial ribosomal protein bS16 family.

The protein resides in the plastid. Its subcellular location is the chloroplast. The sequence is that of Small ribosomal subunit protein bS16c from Coffea arabica (Arabian coffee).